The sequence spans 557 residues: Portal protein (557 aa).

This sequence belongs to the herpesviridae portal protein family. In terms of assembly, homododecamerizes. Interacts with terminase subunits TRM1 and TRM3.

Its subcellular location is the virion. It is found in the host nucleus. In terms of biological role, forms a portal in the viral capsid through which viral DNA is translocated during DNA packaging. Assembles as a dodecamer at a single fivefold axe of the T=16 icosahedric capsid. Binds to the molecular motor that translocates the viral DNA, termed terminase. In Connochaetes taurinus (Blue wildebeest), this protein is Portal protein (43).